Reading from the N-terminus, the 146-residue chain is MAHSFLDEQREETRLIIDELLEDGSDPEALYTIEHHLSADDFDTLEKVAVEAFKLGYEVTDAEELEVEGGEKLMCCDAVSEIALQAELIDAQVEQLFTLTQRLEVNYDGWGTYFEDPDGEEEEGDEFDQDDEDGPADRDEVPATRH.

Residues 110-146 (WGTYFEDPDGEEEEGDEFDQDDEDGPADRDEVPATRH) are disordered. A compositionally biased stretch (acidic residues) spans 115-134 (EDPDGEEEEGDEFDQDDEDG). Residues 135–146 (PADRDEVPATRH) are compositionally biased toward basic and acidic residues.

Belongs to the RraB family. In terms of assembly, interacts with the C-terminal region of Rne.

The protein localises to the cytoplasm. In terms of biological role, globally modulates RNA abundance by binding to RNase E (Rne) and regulating its endonucleolytic activity. Can modulate Rne action in a substrate-dependent manner by altering the composition of the degradosome. This Sodalis glossinidius (strain morsitans) protein is Regulator of ribonuclease activity B.